The following is a 126-amino-acid chain: Nascent polypeptide-associated complex protein (126 aa).

An NAC-A/B domain is found at 10 to 77 (PRMMKQMQKM…AKKVAKAEEK (68 aa)).

The protein belongs to the NAC-alpha family. Homodimer. Interacts with the ribosome. Binds ribosomal RNA.

Functionally, contacts the emerging nascent chain on the ribosome. The protein is Nascent polypeptide-associated complex protein of Methanococcus maripaludis (strain C5 / ATCC BAA-1333).